The primary structure comprises 160 residues: Ribonuclease ARB_07070 (160 aa).

The signal sequence occupies residues 1–18; it reads MVSFKAILTLSLIGAAFA. Residues 26–51 are disordered; sequence AEPVEDSGAVANSPEGSGMDLGGTDP. Glu103 functions as the Proton acceptor in the catalytic mechanism. His144 serves as the catalytic Proton donor.

It belongs to the ribonuclease U2 family.

The protein localises to the secreted. Its function is as follows. This purine-specific ribonuclease cleaves 28S RNA in eukaryotic ribosomes, inhibits protein synthesis, and shows antitumor activity. The protein is Ribonuclease ARB_07070 of Arthroderma benhamiae (strain ATCC MYA-4681 / CBS 112371) (Trichophyton mentagrophytes).